Consider the following 893-residue polypeptide: Nitrate reductase [NADPH] (893 aa).

A disordered region spans residues 1-83; sequence MSVTTQQPAV…KPTPDAHVPR (83 aa). The segment covering 55–65 has biased composition (pro residues); it reads PDFPLPPPANP. Residues 71–83 show a composition bias toward basic and acidic residues; the sequence is DIDKPTPDAHVPR. C170 contacts Mo-molybdopterin. The Cytochrome b5 heme-binding domain occupies 536-611; that stretch reads NRIVELDELK…MPAYHIGTLS (76 aa). The heme site is built by H571 and H594. The FAD-binding FR-type domain occupies 641–752; sequence RTWSKALLSS…KGPIGKFEYL (112 aa). FAD contacts are provided by residues 695–698, 712–716, 726–728, S776, and T779; these read RSYT, LIKIY, and KMT. 863–872 contacts NADP(+); the sequence is LVLVCGPEGL.

The protein belongs to the nitrate reductase family. Homodimer. FAD is required as a cofactor. The cofactor is heme. Requires Mo-molybdopterin as cofactor.

The catalysed reaction is nitrite + NADP(+) + H2O = nitrate + NADPH + H(+). Nitrate reductase is a key enzyme involved in the first step of nitrate assimilation in plants, fungi and bacteria. This chain is Nitrate reductase [NADPH] (NIAD), found in Leptosphaeria maculans (Blackleg fungus).